A 1241-amino-acid chain; its full sequence is MMENWPKKPEGSQWTDDQWKAVVANGRDILVAAAAGSGKTAVLVERIIKKIINEENPVDVDRLLVVTFTNAAAQEMKNRIGEALEKVLIDEPGSQHVRKQLSLLNKASISTIHSFCLQVIRGYYYMLDVDPRFRIANQTENELLKEEVLDDILEEEYGIEDNTIFFELVDRYTSDRSDDDLQRMILALHTESRAHPNPEKWLDKLVEAYDVEGKTIEDLVYASYLLEDVKFQLETAEQHIRKATELAMLPDGPAPRVETLQADLALLGTLSSAARESWTSVYEAMQNVSWQTLKRIKKSDYNEDIVKQVDSLRNKAKDEVKKLQEELFSRRPESFLRDFQDMHPVLEKLVQLVKVFTGRFQAMKRDKGMVDFTDLEHFCLQILSEQSEDGEMKPSAVALQYRNKFAEVLVDEYQDTNFVQESIIKFVTKDSESEGNLFMVGDVKQSIYRFRLAEPGLFLGKYKRFTQEGLGGGMKIDLAKNFRSRHEVLAGTNFIFKQIMGEEVGEIDYDADAELKLGASYPEGEDVAAELLCIQQTEEEVIDGEEGAEVEKAQLEARLMAQRIKAMVDSGYEVYDRKTDSMRPVQYRDFVILLRSMPWAPQIMEELKLQGIPVYADLATGYFEATEVNIMMNVFRVIDNPMQDIPLAAVLRSPIVGLNDEELATLRAHGKKGSFYEVMSSFLKGAPLEEEKELHDKLEWFYNLLQGWREFARQQSLSDLIWKVYGETGYYDFVGGLPAGKQRQANLRVLYDRARQYEATSFRGLFRFLRFIERILERGDDMGTARALGEQEDVVRIMTIHKSKGLEFPVVFVAGLGRRFNTQDLMKRFLLHKDFGFGSQFIDPRKRIKYTTLSQLAIKRKMKMELIAEEMRVLYVALTRAKEKLILIGTVKDANKEMEKWLDAREHSEWLLPDHIRAGASCYLDWIAPSLYRHRDSEMLLELGQGSIPDEIYGYDTSWKVEVVDGNTLLAPEPVQEEKQELLEALREKKAVPLESERKEEVYDRLMWKYGYEEATSHRAKQSVTEIKRNYQSEEGSDNAFIKKLRAPIRTRPRFMEKKGLTYAERGTAVHAVMQHVDLKKPVTVEVLQEQIAGMVNKELLTFEQAEEIAIEKVISFFDSDLGKRVLAAKSVEREVPFTMMLAAEEAYQDWQGESGESILVQGVIDCMIEEEDGITLIDFKTDTIEGKFPGGFDQAKPILEVRYKVQLSLYAKALEKSLQHPVKEKCLYFFDGNHVIKVEE.

A UvrD-like helicase ATP-binding domain is found at 12–485 (SQWTDDQWKA…IDLAKNFRSR (474 aa)). Position 33–40 (33–40 (AAAGSGKT)) interacts with ATP. In terms of domain architecture, UvrD-like helicase C-terminal spans 505–805 (GEIDYDADAE…RIMTIHKSKG (301 aa)).

The protein belongs to the helicase family. AddA subfamily. Heterodimer of AddA and AddB/RexB. Mg(2+) is required as a cofactor.

It carries out the reaction Couples ATP hydrolysis with the unwinding of duplex DNA by translocating in the 3'-5' direction.. The enzyme catalyses ATP + H2O = ADP + phosphate + H(+). Its function is as follows. The heterodimer acts as both an ATP-dependent DNA helicase and an ATP-dependent, dual-direction single-stranded exonuclease. Recognizes the chi site generating a DNA molecule suitable for the initiation of homologous recombination. The AddA nuclease domain is required for chi fragment generation; this subunit has the helicase and 3' -&gt; 5' nuclease activities. The protein is ATP-dependent helicase/nuclease subunit A of Bacillus cereus (strain ZK / E33L).